The sequence spans 338 residues: S-adenosylmethionine:tRNA ribosyltransferase-isomerase (338 aa).

The protein belongs to the QueA family. In terms of assembly, monomer.

Its subcellular location is the cytoplasm. The catalysed reaction is 7-aminomethyl-7-carbaguanosine(34) in tRNA + S-adenosyl-L-methionine = epoxyqueuosine(34) in tRNA + adenine + L-methionine + 2 H(+). The protein operates within tRNA modification; tRNA-queuosine biosynthesis. In terms of biological role, transfers and isomerizes the ribose moiety from AdoMet to the 7-aminomethyl group of 7-deazaguanine (preQ1-tRNA) to give epoxyqueuosine (oQ-tRNA). In Francisella tularensis subsp. tularensis (strain WY96-3418), this protein is S-adenosylmethionine:tRNA ribosyltransferase-isomerase.